The sequence spans 200 residues: Proteasome subunit beta 2 (200 aa).

Residues M1–G7 constitute a propeptide, removed in mature form; by autocatalysis. T8 acts as the Nucleophile in catalysis.

It belongs to the peptidase T1B family. As to quaternary structure, the 20S proteasome core is composed of 14 alpha and 14 beta subunits that assemble into four stacked heptameric rings, resulting in a barrel-shaped structure. The two inner rings, each composed of seven catalytic beta subunits, are sandwiched by two outer rings, each composed of seven alpha subunits. The catalytic chamber with the active sites is on the inside of the barrel. Has a gated structure, the ends of the cylinder being occluded by the N-termini of the alpha-subunits. Is capped at one or both ends by the proteasome regulatory ATPase, PAN.

The protein resides in the cytoplasm. It carries out the reaction Cleavage of peptide bonds with very broad specificity.. With respect to regulation, the formation of the proteasomal ATPase PAN-20S proteasome complex, via the docking of the C-termini of PAN into the intersubunit pockets in the alpha-rings, triggers opening of the gate for substrate entry. Interconversion between the open-gate and close-gate conformations leads to a dynamic regulation of the 20S proteasome proteolysis activity. Component of the proteasome core, a large protease complex with broad specificity involved in protein degradation. In Thermococcus gammatolerans (strain DSM 15229 / JCM 11827 / EJ3), this protein is Proteasome subunit beta 2.